The following is a 269-amino-acid chain: GATA transcription factor 3 (269 aa).

Positions K136 to R143 match the Nuclear localization signal motif. The segment at L176 to N230 adopts a GATA-type zinc-finger fold. Residues K245–W269 are disordered.

It belongs to the type IV zinc-finger family. Class A subfamily. In terms of tissue distribution, mostly expressed in roots. Also expressed in stems, flowers and leaves.

The protein resides in the nucleus. Transcriptional activator that specifically binds 5'-GATA-3' or 5'-GAT-3' motifs within gene promoters. May be involved in the regulation of some light-responsive genes. In Arabidopsis thaliana (Mouse-ear cress), this protein is GATA transcription factor 3 (GATA3).